Consider the following 90-residue polypeptide: Bombyxin B-7 (90 aa).

The N-terminal stretch at 1–20 (MMKTSVMLMLVVVISLMCSG) is a signal peptide. 3 disulfide bridges follow: Cys-30–Cys-76, Cys-42–Cys-89, and Cys-75–Cys-80. Positions 49-67 (GGAQYAPYFWTRQYLGSRG) are cleaved as a propeptide — c peptide like.

Belongs to the insulin family. Heterodimer of a B chain and an A chain linked by two disulfide bonds.

Its subcellular location is the secreted. Functionally, brain peptide responsible for activation of prothoracic glands to produce ecdysone in insects. This is Bombyxin B-7 (BBXB7) from Bombyx mori (Silk moth).